Here is a 385-residue protein sequence, read N- to C-terminus: Lipid-A-disaccharide synthase (385 aa).

Belongs to the LpxB family.

The catalysed reaction is a lipid X + a UDP-2-N,3-O-bis[(3R)-3-hydroxyacyl]-alpha-D-glucosamine = a lipid A disaccharide + UDP + H(+). The protein operates within bacterial outer membrane biogenesis; LPS lipid A biosynthesis. Condensation of UDP-2,3-diacylglucosamine and 2,3-diacylglucosamine-1-phosphate to form lipid A disaccharide, a precursor of lipid A, a phosphorylated glycolipid that anchors the lipopolysaccharide to the outer membrane of the cell. In Xylella fastidiosa (strain M12), this protein is Lipid-A-disaccharide synthase.